The chain runs to 498 residues: Aspartyl/glutamyl-tRNA(Asn/Gln) amidotransferase subunit B (498 aa).

It belongs to the GatB/GatE family. GatB subfamily. Heterotrimer of A, B and C subunits.

It catalyses the reaction L-glutamyl-tRNA(Gln) + L-glutamine + ATP + H2O = L-glutaminyl-tRNA(Gln) + L-glutamate + ADP + phosphate + H(+). The enzyme catalyses L-aspartyl-tRNA(Asn) + L-glutamine + ATP + H2O = L-asparaginyl-tRNA(Asn) + L-glutamate + ADP + phosphate + 2 H(+). Its function is as follows. Allows the formation of correctly charged Asn-tRNA(Asn) or Gln-tRNA(Gln) through the transamidation of misacylated Asp-tRNA(Asn) or Glu-tRNA(Gln) in organisms which lack either or both of asparaginyl-tRNA or glutaminyl-tRNA synthetases. The reaction takes place in the presence of glutamine and ATP through an activated phospho-Asp-tRNA(Asn) or phospho-Glu-tRNA(Gln). The chain is Aspartyl/glutamyl-tRNA(Asn/Gln) amidotransferase subunit B from Caulobacter vibrioides (strain ATCC 19089 / CIP 103742 / CB 15) (Caulobacter crescentus).